The following is a 220-amino-acid chain: Urease accessory protein UreE (220 aa).

Residues 145-220 (EGGAYSAGGH…QIHKRRPDNL (76 aa)) are disordered. The span at 156-177 (HGHDHGSHEHSAHDHGKHDHAP) shows a compositional bias: basic and acidic residues. Residues 178–188 (AKPATAATPAA) are compositionally biased toward low complexity. Positions 191 to 206 (HGPDCNHGHDHAHEAK) are enriched in basic and acidic residues.

This sequence belongs to the UreE family.

Its subcellular location is the cytoplasm. Involved in urease metallocenter assembly. Binds nickel. Probably functions as a nickel donor during metallocenter assembly. The chain is Urease accessory protein UreE from Polaromonas sp. (strain JS666 / ATCC BAA-500).